The chain runs to 1520 residues: DNA topoisomerase 2 top-2 (1520 aa).

Positions 1–10 (MSDSDSEFSI) are enriched in acidic residues. Residues 1-40 (MSDSDSEFSIEDSPKKKTAPKKEKASPKKKKDDANESMVM) form a disordered region. Residues 12-34 (DSPKKKTAPKKEKASPKKKKDDA) show a composition bias toward basic and acidic residues. ATP-binding positions include N126, N155, 183–185 (SSN), 196–203 (GRNGYGAK), and 411–413 (QTK). Residues 490–607 (CTLILTEGDS…SLIQRNFVEE (118 aa)) enclose the Toprim domain. Mg(2+) is bound by residues E496, D576, and D578. Residues 750 to 1219 (IPCLVDGFKP…TWQDLWHEDL (470 aa)) enclose the Topo IIA-type catalytic domain. Y840 functions as the O-(5'-phospho-DNA)-tyrosine intermediate in the catalytic mechanism. The interval 1249-1520 (AADAKTGRGP…RGRVVDSDSD (272 aa)) is disordered. A compositionally biased stretch (basic and acidic residues) spans 1283–1320 (TKAKYEKMSQPKKERVKKEPKEPKEPKKVKKEGQDIKK). A compositionally biased stretch (acidic residues) spans 1342 to 1364 (MSEESDVEFDEGIDFDSDDDGVE).

The protein belongs to the type II topoisomerase family. Homodimer. Interacts with nmad-1; the interaction is required for localization of top-2 to DNA. Interacts with gcna-1; this interaction allows the resolution of topoisomerase 2 DNA-protein cross-links. Mg(2+) is required as a cofactor. Mn(2+) serves as cofactor. The cofactor is Ca(2+). In terms of tissue distribution, expressed in the hermaphrodite and male germline.

The protein localises to the nucleus. It localises to the nucleoplasm. Its subcellular location is the chromosome. It is found in the cytoplasm. The protein resides in the cytoskeleton. The protein localises to the spindle. The catalysed reaction is ATP-dependent breakage, passage and rejoining of double-stranded DNA.. Functionally, control of topological states of DNA by transient breakage and subsequent rejoining of DNA strands. Topoisomerase II makes double-strand breaks. Essential during mitosis in the adult germline and during embryogenesis for proper segregation of daughter chromosomes. Required for centromere resolution during mitosis. Required for chromosome segregation in anaphase of meiosis I during spermatogenesis. Promotes cleavage furrow stability during cytokinesis upon the presence of chromatin obstructions. Promotes DNA break formation upon zygotic genome activation in the Z2 and Z3 primordial germ cells in L1 larvae, thereby activating a checkpoint response. Essential for embryogenesis. In Caenorhabditis elegans, this protein is DNA topoisomerase 2 top-2.